The primary structure comprises 168 residues: Prolyl-tRNA synthetase associated domain-containing protein 1 (168 aa).

It belongs to the PRORSD1 family.

The protein is Prolyl-tRNA synthetase associated domain-containing protein 1 (prorsd1p) of Xenopus laevis (African clawed frog).